A 434-amino-acid chain; its full sequence is Homogentisate 1,2-dioxygenase (434 aa).

The Proton acceptor role is filled by His289. Fe cation-binding residues include His332 and Glu338. Homogentisate-binding residues include Tyr347 and His368. A Fe cation-binding site is contributed by His368.

It belongs to the homogentisate dioxygenase family. In terms of assembly, hexamer; dimer of trimers. Fe cation serves as cofactor.

It carries out the reaction homogentisate + O2 = 4-maleylacetoacetate + H(+). Its pathway is amino-acid degradation; L-phenylalanine degradation; acetoacetate and fumarate from L-phenylalanine: step 4/6. Involved in the catabolism of homogentisate (2,5-dihydroxyphenylacetate or 2,5-OH-PhAc), a central intermediate in the degradation of phenylalanine and tyrosine. Catalyzes the oxidative ring cleavage of the aromatic ring of homogentisate to yield maleylacetoacetate. In Pseudomonas syringae pv. tomato (strain ATCC BAA-871 / DC3000), this protein is Homogentisate 1,2-dioxygenase.